Reading from the N-terminus, the 416-residue chain is Orexin/Hypocretin receptor type 1 (416 aa).

Residues 1 to 22 (MEPSATPGAQPGVPTSSGEPFH) form a disordered region. The Extracellular portion of the chain corresponds to 1–46 (MEPSATPGAQPGVPTSSGEPFHLPPDYEDEFLRYLWRDYLYPKQYE). Residues 26 to 41 (DYEDEFLRYLWRDYLY) form a required for response to orexin-A region. A helical transmembrane segment spans residues 47–67 (WVLIAAYVAVFLIALVGNTLV). Residues 68–82 (CLAVWRNHHMRTVTN) lie on the Cytoplasmic side of the membrane. Residues 83 to 105 (YFIVNLSLADVLVTAICLPASLL) form a helical membrane-spanning segment. Residues 106-119 (VDITESWLFGHALC) are Extracellular-facing. A disulfide bond links Cys-119 and Cys-202. Residues 120-140 (KVIPYLQAVSVSVAVLTLSFI) traverse the membrane as a helical segment. At 141-160 (ALDRWYAICHPLLFKSTARR) the chain is on the cytoplasmic side. A helical membrane pass occupies residues 161-182 (ARGSILGIWAVSLAVMVPQAAV). Over 183–213 (MECSSVLPELANRTRLFSVCDERWADELYPK) the chain is Extracellular. A glycan (N-linked (GlcNAc...) asparagine) is linked at Asn-194. The chain crosses the membrane as a helical span at residues 214-235 (IYHSCFFFVTYLAPLGLMGMAY). Topologically, residues 236–298 (FQIFRKLWGP…QMRARRKTAK (63 aa)) are cytoplasmic. Residues 299–321 (MLMVVLLVFALCYLPISVLNVLK) traverse the membrane as a helical segment. The Extracellular portion of the chain corresponds to 322–336 (RVFGMFRQASDREAV). Residues 337–360 (YACFTFSHWLVYANSAANPIIYNF) form a helical membrane-spanning segment. Topologically, residues 361–416 (LSGKFREQFKAAFSCCLPGLGPSSSARHKSLSLQSRCSVSKVSEHVVLTTVTTVLS) are cytoplasmic.

Belongs to the G-protein coupled receptor 1 family. In terms of tissue distribution, highly expressed in the brain in the prefrontal cortex, hippocampus, paraventricular thalamus, ventromedial hypothalamus, arcuate nucleus, dorsal raphe nucleus, and locus coeruleus. Not detected in the spleen, lung, liver, skeletal muscle, kidney and testis. Orexin receptor mRNA expression has also been reported in the adrenal gland, enteric nervous system, and pancreas.

It is found in the cell membrane. In terms of biological role, moderately selective excitatory receptor for orexin-A and, with a lower affinity, for orexin-B neuropeptide. Triggers an increase in cytoplasmic Ca(2+) levels in response to orexin-A binding. The polypeptide is Orexin/Hypocretin receptor type 1 (Rattus norvegicus (Rat)).